The sequence spans 877 residues: Alanine--tRNA ligase (877 aa).

The Zn(2+) site is built by His-565, His-569, Cys-667, and His-671.

It belongs to the class-II aminoacyl-tRNA synthetase family. It depends on Zn(2+) as a cofactor.

Its subcellular location is the cytoplasm. It carries out the reaction tRNA(Ala) + L-alanine + ATP = L-alanyl-tRNA(Ala) + AMP + diphosphate. Catalyzes the attachment of alanine to tRNA(Ala) in a two-step reaction: alanine is first activated by ATP to form Ala-AMP and then transferred to the acceptor end of tRNA(Ala). Also edits incorrectly charged Ser-tRNA(Ala) and Gly-tRNA(Ala) via its editing domain. This Chromobacterium violaceum (strain ATCC 12472 / DSM 30191 / JCM 1249 / CCUG 213 / NBRC 12614 / NCIMB 9131 / NCTC 9757 / MK) protein is Alanine--tRNA ligase.